The primary structure comprises 149 residues: MRAIVQRVKESSVSVDGKTIGEIKKGFTVLVGISKDDTIEDVKYLKKKVVNLRVFEDENGKLNKSLKDVDGELLIISQFTLYGDCRKGNRPSFIEALGGEDAKKLYLDFIDMCKEEINNVQTGEFGADMLVSIKNDGPVTLMIDSKKEF.

The Gly-cisPro motif, important for rejection of L-amino acids motif lies at 137–138; the sequence is GP.

This sequence belongs to the DTD family. In terms of assembly, homodimer.

The protein localises to the cytoplasm. It catalyses the reaction glycyl-tRNA(Ala) + H2O = tRNA(Ala) + glycine + H(+). The enzyme catalyses a D-aminoacyl-tRNA + H2O = a tRNA + a D-alpha-amino acid + H(+). Functionally, an aminoacyl-tRNA editing enzyme that deacylates mischarged D-aminoacyl-tRNAs. Also deacylates mischarged glycyl-tRNA(Ala), protecting cells against glycine mischarging by AlaRS. Acts via tRNA-based rather than protein-based catalysis; rejects L-amino acids rather than detecting D-amino acids in the active site. By recycling D-aminoacyl-tRNA to D-amino acids and free tRNA molecules, this enzyme counteracts the toxicity associated with the formation of D-aminoacyl-tRNA entities in vivo and helps enforce protein L-homochirality. This chain is D-aminoacyl-tRNA deacylase, found in Clostridium novyi (strain NT).